Reading from the N-terminus, the 155-residue chain is S-ribosylhomocysteine lyase (155 aa).

Fe cation-binding residues include H58, H62, and C125.

It belongs to the LuxS family. Homodimer. Fe cation serves as cofactor.

It carries out the reaction S-(5-deoxy-D-ribos-5-yl)-L-homocysteine = (S)-4,5-dihydroxypentane-2,3-dione + L-homocysteine. Functionally, involved in the synthesis of autoinducer 2 (AI-2) which is secreted by bacteria and is used to communicate both the cell density and the metabolic potential of the environment. The regulation of gene expression in response to changes in cell density is called quorum sensing. Catalyzes the transformation of S-ribosylhomocysteine (RHC) to homocysteine (HC) and 4,5-dihydroxy-2,3-pentadione (DPD). The protein is S-ribosylhomocysteine lyase of Helicobacter pylori (strain HPAG1).